A 448-amino-acid polypeptide reads, in one-letter code: Solute carrier family 52, riboflavin transporter, member 2 (448 aa).

5 consecutive transmembrane segments (helical) span residues 14–34 (LLVALLGMGSWAAVNGIWVEL), 47–67 (LPSYLSVVVALGNLGLLVVTL), 79–99 (VPIQVVQVLSVVGTALLAPLW), 105–125 (VAGQLHSVAFLTLALVLALAC), and 147–167 (FFLGQGLSALLPCVLALVQGV). N178 carries N-linked (GlcNAc...) asparagine glycosylation. A helical transmembrane segment spans residues 198 to 218 (WALTALLVTSAAAFQGLLLLL). Residues 228–267 (GAGPELPLGSPGAEEEEKEEEEALPLQEPPSQAAGTIPGP) are disordered. Residues 240 to 250 (AEEEEKEEEEA) are compositionally biased toward acidic residues. 5 consecutive transmembrane segments (helical) span residues 280–300 (AFLLGLLAITSALTNGVLPAV), 315–335 (LAVVLGSAANPLACFLAMGVL), 342–362 (LVGLSLLGMLFGAYLMVLAIL), 369–389 (VGTTAGVVLVVLSWVLCLCVF), and 407–427 (ALLAAGVAIQMGSLLGAGTMF).

The protein belongs to the riboflavin transporter family.

It localises to the cell membrane. The catalysed reaction is riboflavin(in) = riboflavin(out). Its activity is regulated as follows. Riboflavin transport is Na(+)-independent but moderately pH-sensitive. Activity is strongly inhibited by riboflavin analogs, such as lumiflavin. Weakly inhibited by flavin adenine dinucleotide (FAD) and flavin mononucleotide (FMN). In terms of biological role, plasma membrane transporter mediating the uptake by cells of the water soluble vitamin B2/riboflavin that plays a key role in biochemical oxidation-reduction reactions of the carbohydrate, lipid, and amino acid metabolism. May also act as a receptor for 4-hydroxybutyrate. (Microbial infection) In case of infection by retroviruses, acts as a cell receptor to retroviral envelopes similar to the porcine endogenous retrovirus (PERV-A). The protein is Solute carrier family 52, riboflavin transporter, member 2 (SLC52A2) of Papio hamadryas (Hamadryas baboon).